The sequence spans 623 residues: Putative ABC transporter ATP-binding protein MG014 (623 aa).

Positions 16–325 (LILAPFFTFA…YIVLGFILTS (310 aa)) constitute an ABC transmembrane type-1 domain. Helical transmembrane passes span 27–47 (IVID…VFSI), 81–101 (VLAT…LISI), 157–177 (FLRL…FAVT), 181–201 (DMSI…GILN), 266–286 (NIPF…LLVF), and 307–327 (IFAF…TSLT). Residues 365–611 (LEFRNISFGL…CSLYQKMKES (247 aa)) form the ABC transporter domain. 400–407 (GPTGSGKS) contacts ATP.

It belongs to the ABC transporter superfamily.

Its subcellular location is the cell membrane. In Mycoplasma genitalium (strain ATCC 33530 / DSM 19775 / NCTC 10195 / G37) (Mycoplasmoides genitalium), this protein is Putative ABC transporter ATP-binding protein MG014.